Consider the following 624-residue polypeptide: Sulfite reductase [ferredoxin] (624 aa).

The segment at residues 52-137 is a cross-link (3'-(S-cysteinyl)-tyrosine (Tyr-Cys)); sequence YQQDNRDNRV…ENLGSTISAC (86 aa). [4Fe-4S] cluster-binding residues include Cys-446, Cys-452, Cys-491, and Cys-495. Siroheme is bound at residue Cys-495.

This sequence belongs to the nitrite and sulfite reductase 4Fe-4S domain family. In terms of assembly, monomer. Requires siroheme as cofactor. [4Fe-4S] cluster is required as a cofactor.

It carries out the reaction hydrogen sulfide + 6 oxidized [2Fe-2S]-[ferredoxin] + 3 H2O = sulfite + 6 reduced [2Fe-2S]-[ferredoxin] + 7 H(+). Its function is as follows. Catalyzes the reduction of sulfite to sulfide, a step in the biosynthesis of sulfur-containing amino acids and cofactors. In Synechococcus elongatus (strain ATCC 33912 / PCC 7942 / FACHB-805) (Anacystis nidulans R2), this protein is Sulfite reductase [ferredoxin] (sir).